Here is a 149-residue protein sequence, read N- to C-terminus: Nucleoside diphosphate kinase (149 aa).

Residues lysine 9, phenylalanine 57, arginine 85, threonine 91, arginine 102, and asparagine 112 each contribute to the ATP site. The active-site Pros-phosphohistidine intermediate is histidine 115.

Belongs to the NDK family. In terms of assembly, homotetramer. The cofactor is Mg(2+).

The protein localises to the cytoplasm. The catalysed reaction is a 2'-deoxyribonucleoside 5'-diphosphate + ATP = a 2'-deoxyribonucleoside 5'-triphosphate + ADP. It catalyses the reaction a ribonucleoside 5'-diphosphate + ATP = a ribonucleoside 5'-triphosphate + ADP. Major role in the synthesis of nucleoside triphosphates other than ATP. The ATP gamma phosphate is transferred to the NDP beta phosphate via a ping-pong mechanism, using a phosphorylated active-site intermediate. The polypeptide is Nucleoside diphosphate kinase (Desulfitobacterium hafniense (strain DSM 10664 / DCB-2)).